The chain runs to 163 residues: Photosystem II extrinsic protein V (163 aa).

The N-terminal stretch at 1 to 26 (MFKTYSKSFACILFCIFNIFVVSASA) is a signal peptide. Heme c-binding residues include Cys-63, Cys-66, His-67, and Met-130.

Belongs to the cytochrome c family. PsbV subfamily. As to quaternary structure, PSII is composed of 1 copy each of membrane proteins PsbA, PsbB, PsbC, PsbD, PsbE, PsbF, PsbH, PsbI, PsbJ, PsbK, PsbL, PsbM, PsbT, PsbY, PsbZ, Psb30/Ycf12, at least 3 peripheral proteins of the oxygen-evolving complex and a large number of cofactors. It forms dimeric complexes. Heme c is required as a cofactor.

Its subcellular location is the plastid. The protein localises to the chloroplast thylakoid membrane. Its function is as follows. One of the extrinsic, lumenal subunits of photosystem II (PSII). PSII is a light-driven water plastoquinone oxidoreductase, using light energy to abstract electrons from H(2)O, generating a proton gradient subsequently used for ATP formation. The extrinsic proteins stabilize the structure of photosystem II oxygen-evolving complex (OEC), the ion environment of oxygen evolution and protect the OEC against heat-induced inactivation. This chain is Photosystem II extrinsic protein V, found in Thalassiosira pseudonana (Marine diatom).